Reading from the N-terminus, the 341-residue chain is Aspartate carbamoyltransferase catalytic subunit (341 aa).

The carbamoyl phosphate site is built by Arg-89 and Thr-90. Lys-117 is a binding site for L-aspartate. Positions 139, 169, and 172 each coordinate carbamoyl phosphate. 2 residues coordinate L-aspartate: Arg-202 and Arg-257. Carbamoyl phosphate is bound by residues Gly-298 and Pro-299.

Belongs to the aspartate/ornithine carbamoyltransferase superfamily. ATCase family. As to quaternary structure, heterododecamer (2C3:3R2) of six catalytic PyrB chains organized as two trimers (C3), and six regulatory PyrI chains organized as three dimers (R2).

It catalyses the reaction carbamoyl phosphate + L-aspartate = N-carbamoyl-L-aspartate + phosphate + H(+). It participates in pyrimidine metabolism; UMP biosynthesis via de novo pathway; (S)-dihydroorotate from bicarbonate: step 2/3. Catalyzes the condensation of carbamoyl phosphate and aspartate to form carbamoyl aspartate and inorganic phosphate, the committed step in the de novo pyrimidine nucleotide biosynthesis pathway. The protein is Aspartate carbamoyltransferase catalytic subunit of Paraburkholderia phytofirmans (strain DSM 17436 / LMG 22146 / PsJN) (Burkholderia phytofirmans).